The chain runs to 991 residues: Mediator of RNA polymerase II transcription subunit 5 (991 aa).

This sequence belongs to the Mediator complex subunit 5 family. Component of the Mediator complex.

The protein resides in the nucleus. In terms of biological role, component of the Mediator complex, a coactivator involved in the regulated transcription of nearly all RNA polymerase II-dependent genes. Mediator functions as a bridge to convey information from gene-specific regulatory proteins to the basal RNA polymerase II transcription machinery. Mediator is recruited to promoters by direct interactions with regulatory proteins and serves as a scaffold for the assembly of a functional preinitiation complex with RNA polymerase II and the general transcription factors. This chain is Mediator of RNA polymerase II transcription subunit 5 (NUT1), found in Yarrowia lipolytica (strain CLIB 122 / E 150) (Yeast).